Reading from the N-terminus, the 49-residue chain is Defensin-like protein 1 (49 aa).

4 disulfide bridges follow: cysteine 3-cysteine 49, cysteine 14-cysteine 35, cysteine 20-cysteine 43, and cysteine 24-cysteine 45.

The protein belongs to the DEFL family.

The protein resides in the secreted. Possesses antimicrobial activity sensitive to inorganic cations. Binds specifically to the fungal plasma membrane. Has no inhibitory effect on insect gut alpha-amylase. The sequence is that of Defensin-like protein 1 from Clitoria ternatea (Butterfly pea).